The chain runs to 226 residues: 26S proteasome non-ATPase regulatory subunit 10 (226 aa).

A required for nuclear localization region spans residues Met-1–Asp-37. Positions Met-1–Asp-71 are interaction with RB1. ANK repeat units follow at residues Gly-3 to Thr-36, Asp-37 to Lys-69, Asp-70 to Val-102, Asn-103 to Lys-135, Asp-136 to Gln-168, Asp-169 to Glu-201, and Asn-202 to Gly-226. The interval Asp-39–Gly-226 is interaction with RELA. Residues Glu-171–Gly-226 form an interaction with RB1 region.

In terms of assembly, part of transient complex containing PSMD10, PSMC4, PSMC5 and PAAF1 formed during the assembly of the 26S proteasome. Stays associated throughout the assembly of the PA700/19S RC and is released upon association with the 20S core. Interacts with PSMC4. Interacts with RB1. Interacts with CDK4. Interacts with MDM2. Interacts with RELA. Associates with a CDK4:CCND2 serine/threonine kinase complex. Interacts with ARHGDIA and increases the interaction between ARHGDIA and RHOA, hence promotes ARHGDIA inactivation of RHOA and ROCK. As to expression, tends to be up-regulated in cancer cells with RAS mutations, including lung cancers and adenocarconimas (at protein level).

It localises to the cytoplasm. It is found in the nucleus. Functionally, acts as a chaperone during the assembly of the 26S proteasome, specifically of the PA700/19S regulatory complex (RC). In the initial step of the base subcomplex assembly is part of an intermediate PSMD10:PSMC4:PSMC5:PAAF1 module which probably assembles with a PSMD5:PSMC2:PSMC1:PSMD2 module. Independently of the proteasome, regulates EGF-induced AKT activation through inhibition of the RHOA/ROCK/PTEN pathway, leading to prolonged AKT activation. Plays an important role in RAS-induced tumorigenesis. Acts as an proto-oncoprotein by being involved in negative regulation of tumor suppressors RB1 and p53/TP53. Overexpression is leading to phosphorylation of RB1 and proteasomal degradation of RB1. Regulates CDK4-mediated phosphorylation of RB1 by competing with CDKN2A for binding with CDK4. Facilitates binding of MDM2 to p53/TP53 and the mono- and polyubiquitination of p53/TP53 by MDM2 suggesting a function in targeting the TP53:MDM2 complex to the 26S proteasome. Involved in p53-independent apoptosis. Involved in regulation of NF-kappa-B by retaining it in the cytoplasm. Binds to the NF-kappa-B component RELA and accelerates its XPO1/CRM1-mediated nuclear export. In Homo sapiens (Human), this protein is 26S proteasome non-ATPase regulatory subunit 10 (PSMD10).